Consider the following 197-residue polypeptide: Rac-like GTP-binding protein RHO1 (197 aa).

Position 13–20 (13–20 (GDGAVGKT)) interacts with GTP. The Effector region motif lies at 35–43 (YVPTVFDNF). GTP-binding positions include 60 to 64 (DTAGQ) and 118 to 121 (TKLD). Cys-194 is modified (cysteine methyl ester). Cys-194 carries the S-geranylgeranyl cysteine lipid modification. Residues 195–197 (SIL) constitute a propeptide, removed in mature form.

This sequence belongs to the small GTPase superfamily. Rho family.

It is found in the cytoplasm. The protein localises to the membrane. Inactive GDP-bound Rho GTPases reside in the cytosol, are found in a complex with Rho GDP-dissociation inhibitors (Rho GDIs), and are released from the GDI protein in order to translocate to membranes upon activation. The chain is Rac-like GTP-binding protein RHO1 (RHO1) from Beta vulgaris (Sugar beet).